A 325-amino-acid chain; its full sequence is GTP 3',8-cyclase (325 aa).

The region spanning 4–219 (NYNRNINYLR…HGLQQKFGLL (216 aa)) is the Radical SAM core domain. Arginine 13 is a GTP binding site. [4Fe-4S] cluster is bound by residues cysteine 20 and cysteine 24. Tyrosine 26 contributes to the S-adenosyl-L-methionine binding site. Cysteine 27 provides a ligand contact to [4Fe-4S] cluster. Arginine 63 provides a ligand contact to GTP. Glycine 67 serves as a coordination point for S-adenosyl-L-methionine. Threonine 94 serves as a coordination point for GTP. Serine 118 is an S-adenosyl-L-methionine binding site. Lysine 155 is a GTP binding site. An S-adenosyl-L-methionine-binding site is contributed by methionine 189. Residues cysteine 254 and cysteine 257 each coordinate [4Fe-4S] cluster. Residue 259-261 (RLR) participates in GTP binding. A [4Fe-4S] cluster-binding site is contributed by cysteine 271.

The protein belongs to the radical SAM superfamily. MoaA family. In terms of assembly, monomer and homodimer. The cofactor is [4Fe-4S] cluster.

It catalyses the reaction GTP + AH2 + S-adenosyl-L-methionine = (8S)-3',8-cyclo-7,8-dihydroguanosine 5'-triphosphate + 5'-deoxyadenosine + L-methionine + A + H(+). It participates in cofactor biosynthesis; molybdopterin biosynthesis. In terms of biological role, catalyzes the cyclization of GTP to (8S)-3',8-cyclo-7,8-dihydroguanosine 5'-triphosphate. This Desulforamulus reducens (strain ATCC BAA-1160 / DSM 100696 / MI-1) (Desulfotomaculum reducens) protein is GTP 3',8-cyclase.